Here is a 287-residue protein sequence, read N- to C-terminus: Elongation factor Ts (287 aa).

The segment at 80 to 83 (TDFL) is involved in Mg(2+) ion dislocation from EF-Tu.

The protein belongs to the EF-Ts family.

The protein resides in the cytoplasm. Functionally, associates with the EF-Tu.GDP complex and induces the exchange of GDP to GTP. It remains bound to the aminoacyl-tRNA.EF-Tu.GTP complex up to the GTP hydrolysis stage on the ribosome. The protein is Elongation factor Ts of Pseudomonas putida (strain ATCC 47054 / DSM 6125 / CFBP 8728 / NCIMB 11950 / KT2440).